The chain runs to 278 residues: tRNA uridine(34) hydroxylase (278 aa).

Residues 122–216 (QDPDVVVIDT…YLETIAPEES (95 aa)) enclose the Rhodanese domain. Cysteine 176 functions as the Cysteine persulfide intermediate in the catalytic mechanism.

It belongs to the TrhO family.

It catalyses the reaction uridine(34) in tRNA + AH2 + O2 = 5-hydroxyuridine(34) in tRNA + A + H2O. Catalyzes oxygen-dependent 5-hydroxyuridine (ho5U) modification at position 34 in tRNAs. In Synechocystis sp. (strain ATCC 27184 / PCC 6803 / Kazusa), this protein is tRNA uridine(34) hydroxylase.